Consider the following 107-residue polypeptide: MTFVVTDNCIKCKYTDCVEVCPVDCFYEGPNFLVIHPDECIDCALCEPECPAQAIFSEDEVPEDQQEFIELNADLAEVWPNITEKKDALADAEEWDGVKDKLQYLER.

2 4Fe-4S ferredoxin-type domains span residues 2 to 30 (TFVVTDNCIKCKYTDCVEVCPVDCFYEGP) and 31 to 60 (NFLVIHPDECIDCALCEPECPAQAIFSEDE). Positions 9 and 17 each coordinate [3Fe-4S] cluster. C21, C40, C43, and C46 together coordinate [4Fe-4S] cluster. C50 serves as a coordination point for [3Fe-4S] cluster.

[4Fe-4S] cluster is required as a cofactor. It depends on [3Fe-4S] cluster as a cofactor.

Ferredoxins are iron-sulfur proteins that transfer electrons in a wide variety of metabolic reactions. The chain is Ferredoxin 1 from Stutzerimonas stutzeri (Pseudomonas stutzeri).